Reading from the N-terminus, the 366-residue chain is Protein-methionine-sulfoxide reductase catalytic subunit MsrP (366 aa).

Over residues 1-22 the composition is skewed to low complexity; the sequence is MHNTFTHTKNNTHTKNNTQAKN. Positions 1-40 are disordered; the sequence is MHNTFTHTKNNTHTKNNTQAKNSGSQTKSNAVSLNKPRKL. The tat-type signal signal peptide spans 1 to 76; sequence MHNTFTHTKN…TLALPASAQA (76 aa). Over residues 23–33 the composition is skewed to polar residues; it reads SGSQTKSNAVS. Mo-molybdopterin-binding positions include Asn120, 123–124, Cys178, Thr213, Asn265, Arg270, and 281–283; these read YE and SIK.

It belongs to the MsrP family. Heterodimer of a catalytic subunit (MsrP) and a heme-binding subunit (MsrQ). The cofactor is Mo-molybdopterin. Predicted to be exported by the Tat system. The position of the signal peptide cleavage has not been experimentally proven.

It localises to the periplasm. It catalyses the reaction L-methionyl-[protein] + a quinone + H2O = L-methionyl-(S)-S-oxide-[protein] + a quinol. It carries out the reaction L-methionyl-[protein] + a quinone + H2O = L-methionyl-(R)-S-oxide-[protein] + a quinol. Part of the MsrPQ system that repairs oxidized periplasmic proteins containing methionine sulfoxide residues (Met-O), using respiratory chain electrons. Thus protects these proteins from oxidative-stress damage caused by reactive species of oxygen and chlorine generated by the host defense mechanisms. MsrPQ is essential for the maintenance of envelope integrity under bleach stress, rescuing a wide series of structurally unrelated periplasmic proteins from methionine oxidation. The catalytic subunit MsrP is non-stereospecific, being able to reduce both (R-) and (S-) diastereoisomers of methionine sulfoxide. The protein is Protein-methionine-sulfoxide reductase catalytic subunit MsrP of Yersinia pestis.